The primary structure comprises 246 residues: UDP-N-acetyl-D-mannosaminuronic acid transferase (246 aa).

Belongs to the glycosyltransferase 26 family.

It catalyses the reaction UDP-N-acetyl-alpha-D-mannosaminouronate + N-acetyl-alpha-D-glucosaminyl-di-trans,octa-cis-undecaprenyl diphosphate = beta-D-ManNAcA-(1-&gt;4)-alpha-D-GlcNAc-di-trans,octa-cis-undecaprenyl diphosphate + UDP + H(+). It participates in bacterial outer membrane biogenesis; enterobacterial common antigen biosynthesis. Catalyzes the synthesis of Und-PP-GlcNAc-ManNAcA (Lipid II), the second lipid-linked intermediate involved in enterobacterial common antigen (ECA) synthesis. The polypeptide is UDP-N-acetyl-D-mannosaminuronic acid transferase (Salmonella agona (strain SL483)).